A 205-amino-acid chain; its full sequence is Small ribosomal subunit protein uS4 (205 aa).

The tract at residues 20-47 is disordered; the sequence is WGRSKSPLNRGKENPPGQHGQRRKKPSD. Residues 94 to 154 form the S4 RNA-binding domain; that stretch reads CRLDAVVYRL…TKSKDMALIL (61 aa).

Belongs to the universal ribosomal protein uS4 family. Part of the 30S ribosomal subunit. Contacts protein S5. The interaction surface between S4 and S5 is involved in control of translational fidelity.

One of the primary rRNA binding proteins, it binds directly to 16S rRNA where it nucleates assembly of the body of the 30S subunit. Functionally, with S5 and S12 plays an important role in translational accuracy. In Paramagnetospirillum magneticum (strain ATCC 700264 / AMB-1) (Magnetospirillum magneticum), this protein is Small ribosomal subunit protein uS4.